The primary structure comprises 313 residues: Competence protein ComGA (313 aa).

138–145 lines the ATP pocket; the sequence is GPVGSGKT.

It belongs to the GSP E family.

It is found in the cell membrane. Its function is as follows. Required for uptake of DNA by competent cells. May be involved in assembly of a complex forming a transformation pilus at the surface of competent cells. The polypeptide is Competence protein ComGA (Streptococcus pneumoniae (strain ATCC BAA-255 / R6)).